The following is a 169-amino-acid chain: Large ribosomal subunit protein uL10 (169 aa).

It belongs to the universal ribosomal protein uL10 family. As to quaternary structure, part of the ribosomal stalk of the 50S ribosomal subunit. The N-terminus interacts with L11 and the large rRNA to form the base of the stalk. The C-terminus forms an elongated spine to which L12 dimers bind in a sequential fashion forming a multimeric L10(L12)X complex.

Its function is as follows. Forms part of the ribosomal stalk, playing a central role in the interaction of the ribosome with GTP-bound translation factors. This chain is Large ribosomal subunit protein uL10, found in Rickettsia peacockii (strain Rustic).